The primary structure comprises 45 residues: Cytochrome c6 (45 aa).

Heme c is bound by residues cysteine 12, cysteine 15, and histidine 16.

This sequence belongs to the cytochrome c family. PetJ subfamily. Monomer. Post-translationally, binds 1 heme c group covalently per subunit.

Its subcellular location is the cellular thylakoid lumen. Functions as an electron carrier between membrane-bound cytochrome b6-f and photosystem I in oxygenic photosynthesis. In Prochlorothrix hollandica, this protein is Cytochrome c6 (petJ).